We begin with the raw amino-acid sequence, 199 residues long: NADH-quinone oxidoreductase subunit C (199 aa).

The protein belongs to the complex I 30 kDa subunit family. As to quaternary structure, NDH-1 is composed of 14 different subunits. Subunits NuoB, C, D, E, F, and G constitute the peripheral sector of the complex.

It is found in the cell inner membrane. The catalysed reaction is a quinone + NADH + 5 H(+)(in) = a quinol + NAD(+) + 4 H(+)(out). In terms of biological role, NDH-1 shuttles electrons from NADH, via FMN and iron-sulfur (Fe-S) centers, to quinones in the respiratory chain. The immediate electron acceptor for the enzyme in this species is believed to be ubiquinone. Couples the redox reaction to proton translocation (for every two electrons transferred, four hydrogen ions are translocated across the cytoplasmic membrane), and thus conserves the redox energy in a proton gradient. In Rhodopseudomonas palustris (strain BisB18), this protein is NADH-quinone oxidoreductase subunit C.